The following is a 219-amino-acid chain: uncharacterized protein (219 aa).

Composition is skewed to basic and acidic residues over residues 1-20, 30-39, and 156-170; these read METP…ESLR, AGRELVELRV, and QEVR…ELQR. Positions 1 to 195 are disordered; that stretch reads METPIEREIR…PSLTASRGDG (195 aa).

The protein belongs to the MISP family.

This is an uncharacterized protein from Homo sapiens (Human).